The following is a 344-amino-acid chain: Autophagy-related protein 14 (344 aa).

Residues 3–18 (CPICHHRAHVVYCAHC) are cysteine repeats. Positions 26-156 (LLKLKLDLIL…VSKICESVRD (131 aa)) form a coiled coil.

The protein belongs to the ATG14 family. Component of the autophagy-specific VPS34 PI3-kinase complex I composed of VPS15, VPS30, VPS34 and ATG14.

Its subcellular location is the preautophagosomal structure membrane. It is found in the vacuole membrane. Its function is as follows. Required for cytoplasm to vacuole transport (Cvt) and autophagy as a part of the autophagy-specific VPS34 PI3-kinase complex I. This complex is essential to recruit the ATG8-phosphatidylinositol conjugate and the ATG12-ATG5 conjugate to the pre-autophagosomal structure. ATG14 mediates the specific binding of the VPS34 PI3-kinase complex I to the preautophagosomal structure (PAS). This is Autophagy-related protein 14 (ATG14) from Saccharomyces cerevisiae (strain YJM789) (Baker's yeast).